Reading from the N-terminus, the 556-residue chain is Oxygen-dependent choline dehydrogenase (556 aa).

An FAD-binding site is contributed by aspartate 4–glutamate 33. Histidine 473 (proton acceptor) is an active-site residue.

Belongs to the GMC oxidoreductase family. The cofactor is FAD.

It carries out the reaction choline + A = betaine aldehyde + AH2. The catalysed reaction is betaine aldehyde + NAD(+) + H2O = glycine betaine + NADH + 2 H(+). It functions in the pathway amine and polyamine biosynthesis; betaine biosynthesis via choline pathway; betaine aldehyde from choline (cytochrome c reductase route): step 1/1. Involved in the biosynthesis of the osmoprotectant glycine betaine. Catalyzes the oxidation of choline to betaine aldehyde and betaine aldehyde to glycine betaine at the same rate. The protein is Oxygen-dependent choline dehydrogenase of Escherichia coli (strain K12 / DH10B).